A 234-amino-acid chain; its full sequence is Ribosome-inactivating protein lychnin (234 aa).

C32 and C115 are joined by a disulfide. Residue E170 is part of the active site.

In terms of assembly, monomer.

It carries out the reaction Endohydrolysis of the N-glycosidic bond at one specific adenosine on the 28S rRNA.. Its function is as follows. Ribosome-inactivating protein of type 1, inhibits protein synthesis in animal cells. Inhibits cell-free translation in rabbit reticulocyte lysate system with an IC(50) of 0.17 nM. The chain is Ribosome-inactivating protein lychnin from Silene chalcedonica (Maltese-cross).